The primary structure comprises 132 residues: Small ribosomal subunit protein uS8 (132 aa).

It belongs to the universal ribosomal protein uS8 family. In terms of assembly, part of the 30S ribosomal subunit. Contacts proteins S5 and S12.

In terms of biological role, one of the primary rRNA binding proteins, it binds directly to 16S rRNA central domain where it helps coordinate assembly of the platform of the 30S subunit. The protein is Small ribosomal subunit protein uS8 of Bifidobacterium longum (strain NCC 2705).